Here is a 433-residue protein sequence, read N- to C-terminus: MLDNKKEYLKDAMFIRDMAMQHEQLFRESIPLIASENIMSPLAMEMLLTDLGFRYAEGLPHHRYYQGNEYVDVIEDKTTELGKRLFNSKTFDPRPLSGTNANMAVLYALTEPGDKISVPPLSGGGHISAAKFGAVGFRGLKTVQYPFDINEMNIDIDGTIKTIKNERPKVCWFGQSVFLFPTPLKELQDAFNEVNARVVYDGAHVAGLIAGGEFQDPLREGAEIITGSTHKTLPGPQHGMIIGNTDDDTWKKVQRGVFPGTLSNHHLNAMAALGVTLAEELDFGRDYAKQIVKNARHLGEKLYEFGFNVLGEKNGFTRSHTLAVDVSKNGGGRKVAENLEKSGIILNKNLLPWDDNKNSQNPSGIRIGVQEITRIGFMEDDVTELAEILRDAVINEKPVNEIRRRALELKSRFNNIEYCYGNMKPYSYIKIFE.

Residues leucine 121 and 125 to 127 contribute to the (6S)-5,6,7,8-tetrahydrofolate site; that span reads GHI. N6-(pyridoxal phosphate)lysine is present on lysine 231.

It belongs to the SHMT family. In terms of assembly, homodimer. It depends on pyridoxal 5'-phosphate as a cofactor.

Its subcellular location is the cytoplasm. It functions in the pathway amino-acid biosynthesis; glycine biosynthesis; glycine from L-serine: step 1/1. Its function is as follows. Catalyzes the reversible interconversion of serine and glycine with a modified folate serving as the one-carbon carrier. Also exhibits a pteridine-independent aldolase activity toward beta-hydroxyamino acids, producing glycine and aldehydes, via a retro-aldol mechanism. This is Serine hydroxymethyltransferase from Picrophilus torridus (strain ATCC 700027 / DSM 9790 / JCM 10055 / NBRC 100828 / KAW 2/3).